The primary structure comprises 173 residues: Crossover junction endodeoxyribonuclease RuvC (173 aa).

Residues Asp8, Glu67, and Asp139 contribute to the active site. Positions 8, 67, and 139 each coordinate Mg(2+).

The protein belongs to the RuvC family. As to quaternary structure, homodimer which binds Holliday junction (HJ) DNA. The HJ becomes 2-fold symmetrical on binding to RuvC with unstacked arms; it has a different conformation from HJ DNA in complex with RuvA. In the full resolvosome a probable DNA-RuvA(4)-RuvB(12)-RuvC(2) complex forms which resolves the HJ. It depends on Mg(2+) as a cofactor.

The protein localises to the cytoplasm. It catalyses the reaction Endonucleolytic cleavage at a junction such as a reciprocal single-stranded crossover between two homologous DNA duplexes (Holliday junction).. Functionally, the RuvA-RuvB-RuvC complex processes Holliday junction (HJ) DNA during genetic recombination and DNA repair. Endonuclease that resolves HJ intermediates. Cleaves cruciform DNA by making single-stranded nicks across the HJ at symmetrical positions within the homologous arms, yielding a 5'-phosphate and a 3'-hydroxyl group; requires a central core of homology in the junction. The consensus cleavage sequence is 5'-(A/T)TT(C/G)-3'. Cleavage occurs on the 3'-side of the TT dinucleotide at the point of strand exchange. HJ branch migration catalyzed by RuvA-RuvB allows RuvC to scan DNA until it finds its consensus sequence, where it cleaves and resolves the cruciform DNA. This chain is Crossover junction endodeoxyribonuclease RuvC, found in Shewanella sediminis (strain HAW-EB3).